A 1315-amino-acid polypeptide reads, in one-letter code: Tetratricopeptide repeat protein 21B (1315 aa).

TPR repeat units lie at residues 108–141, 145–178, 192–225, 285–323, 324–357, 492–525, 563–596, 616–649, 721–754, 756–788, 790–821, 830–863, 883–916, 918–950, 951–984, 1022–1055, 1196–1229, 1231–1263, and 1265–1298; these read RKAL…PHDS, PILK…GNDI, QNYS…QLAL, AQLF…TPQQ, AEIA…NESN, PQAV…SPSY, PLYH…PGMR, LSIF…FSGT, PRSF…NPKD, TLAR…GQQN, LCYD…EPVS, GRSQ…QARI, AEIC…CETD, KIML…DQDN, EPAT…KPDN, PGFQ…SDWG, EKSW…NRSC, KAYE…SNQT, and PAVG…HPTY.

This sequence belongs to the TTC21 family. As to quaternary structure, component of the IFT complex A (IFT-A) complex. IFT-A complex is divided into a core subcomplex composed of IFT122:IFT140:WDR19 which is associated with TULP3 and a peripheral subcomplex composed of IFT43:WDR35:TTC21B. Interacts directy with WDR35 and TTC21B. Interacts with TTC25.

Its subcellular location is the cytoplasm. It localises to the cytoskeleton. The protein localises to the cilium axoneme. Component of the IFT complex A (IFT-A), a complex required for retrograde ciliary transport and entry into cilia of G protein-coupled receptors (GPCRs). Essential for retrograde trafficking of IFT-1, IFT-B and GPCRs. Negatively modulates the SHH signal transduction. This is Tetratricopeptide repeat protein 21B (Ttc21b) from Mus musculus (Mouse).